Reading from the N-terminus, the 471-residue chain is 8-amino-7-oxononanoate synthase (471 aa).

Substrate is bound at residue R40. 131–132 (GY) serves as a coordination point for pyridoxal 5'-phosphate. H156 is a binding site for substrate. Residues S202, H230, and T258 each contribute to the pyridoxal 5'-phosphate site. K261 carries the post-translational modification N6-(pyridoxal phosphate)lysine. Residue T377 participates in substrate binding. A disordered region spans residues 409–471 (SEGQTRREAE…LGAARRETAA (63 aa)).

This sequence belongs to the class-II pyridoxal-phosphate-dependent aminotransferase family. BioF subfamily. Homodimer. The cofactor is pyridoxal 5'-phosphate.

The enzyme catalyses 6-carboxyhexanoyl-[ACP] + L-alanine + H(+) = (8S)-8-amino-7-oxononanoate + holo-[ACP] + CO2. It participates in cofactor biosynthesis; biotin biosynthesis. In terms of biological role, catalyzes the decarboxylative condensation of pimeloyl-[acyl-carrier protein] and L-alanine to produce 8-amino-7-oxononanoate (AON), [acyl-carrier protein], and carbon dioxide. The polypeptide is 8-amino-7-oxononanoate synthase (Burkholderia ambifaria (strain ATCC BAA-244 / DSM 16087 / CCUG 44356 / LMG 19182 / AMMD) (Burkholderia cepacia (strain AMMD))).